The chain runs to 335 residues: DNA polymerase beta (335 aa).

Lys-41 participates in a covalent cross-link: Glycyl lysine isopeptide (Lys-Gly) (interchain with G-Cter in ubiquitin). Lys-60 contacts K(+). Lys-60 serves as a coordination point for Na(+). A Glycyl lysine isopeptide (Lys-Gly) (interchain with G-Cter in ubiquitin) cross-link involves residue Lys-61. K(+) contacts are provided by Leu-62 and Val-65. Na(+) is bound by residues Leu-62 and Val-65. Catalysis depends on Lys-72, which acts as the Nucleophile; Schiff-base intermediate with DNA; for 5'-dRP lyase activity. Residue Lys-72 is modified to N6-acetyllysine. Lys-81 is covalently cross-linked (Glycyl lysine isopeptide (Lys-Gly) (interchain with G-Cter in ubiquitin)). The residue at position 83 (Arg-83) is an Omega-N-methylarginine; by PRMT6. Residues Thr-101, Val-103, and Ile-106 each contribute to the K(+) site. Residues Thr-101, Val-103, and Ile-106 each contribute to the Na(+) site. An a 2'-deoxyribonucleoside 5'-triphosphate-binding site is contributed by Arg-149. Arg-152 is subject to Omega-N-methylarginine; by PRMT6. A 2'-deoxyribonucleoside 5'-triphosphate contacts are provided by Ser-180, Arg-183, Gly-189, and Asp-190. Positions 183-192 are DNA-binding; that stretch reads RGAESSGDMD. Mg(2+)-binding residues include Asp-190, Asp-192, and Asp-256.

Belongs to the DNA polymerase type-X family. As to quaternary structure, monomer. Binds single-stranded DNA (ssDNA). Interacts with APEX1, LIG1, LIG3, FEN1, PCNA and XRCC1. Interacts with HUWE1/ARF-BP1, STUB1/CHIP and USP47. Interacts with FAM168A. It depends on Mg(2+) as a cofactor. Post-translationally, methylation by PRMT6 stimulates the polymerase activity by enhancing DNA binding and processivity. In terms of processing, ubiquitinated at Lys-41, Lys-61 and Lys-81: monoubiquitinated by HUWE1/ARF-BP1. Monoubiquitinated protein is then the target of STUB1/CHIP, which catalyzes polyubiquitination from monoubiquitin, leading to degradation by the proteasome. USP47 mediates the deubiquitination of monoubiquitinated protein, preventing polyubiquitination by STUB1/CHIP and its subsequent degradation.

The protein localises to the nucleus. Its subcellular location is the cytoplasm. The enzyme catalyses DNA(n) + a 2'-deoxyribonucleoside 5'-triphosphate = DNA(n+1) + diphosphate. It catalyses the reaction a 5'-end 2'-deoxyribose-2'-deoxyribonucleotide-DNA = (2E,4S)-4-hydroxypenten-2-al-5-phosphate + a 5'-end 5'-phospho-2'-deoxyribonucleoside-DNA + H(+). It carries out the reaction 2'-deoxyribonucleotide-(2'-deoxyribose 5'-phosphate)-2'-deoxyribonucleotide-DNA = a 3'-end 2'-deoxyribonucleotide-(2,3-dehydro-2,3-deoxyribose 5'-phosphate)-DNA + a 5'-end 5'-phospho-2'-deoxyribonucleoside-DNA + H(+). Its function is as follows. Repair polymerase that plays a key role in base-excision repair. During this process, the damaged base is excised by specific DNA glycosylases, the DNA backbone is nicked at the abasic site by an apurinic/apyrimidic (AP) endonuclease, and POLB removes 5'-deoxyribose-phosphate from the preincised AP site acting as a 5'-deoxyribose-phosphate lyase (5'-dRP lyase); through its DNA polymerase activity, it adds one nucleotide to the 3' end of the arising single-nucleotide gap. Conducts 'gap-filling' DNA synthesis in a stepwise distributive fashion rather than in a processive fashion as for other DNA polymerases. It is also able to cleave sugar-phosphate bonds 3' to an intact AP site, acting as an AP lyase. The chain is DNA polymerase beta (Polb) from Rattus norvegicus (Rat).